The sequence spans 581 residues: Phosphoglucomutase, cytoplasmic (581 aa).

Basic and acidic residues predominate over residues 1–11; it reads MVFSVAKKDTT. The tract at residues 1–20 is disordered; the sequence is MVFSVAKKDTTPYEGQKPGT. Positions 24 and 123 each coordinate alpha-D-glucose 1,6-bisphosphate. S123 functions as the Phosphoserine intermediate in the catalytic mechanism. 4 residues coordinate Mg(2+): S123, D298, D300, and D302. Phosphoserine is present on S123. Alpha-D-glucose 1,6-bisphosphate contacts are provided by D302, R303, T366, E385, S387, and K398.

Belongs to the phosphohexose mutase family. Monomer. The cofactor is Mg(2+).

It is found in the cytoplasm. It carries out the reaction alpha-D-glucose 1-phosphate = alpha-D-glucose 6-phosphate. The enzyme catalyses O-phospho-L-seryl-[protein] + alpha-D-glucose 1-phosphate = alpha-D-glucose 1,6-bisphosphate + L-seryl-[protein]. It catalyses the reaction alpha-D-glucose 1,6-bisphosphate + L-seryl-[protein] = O-phospho-L-seryl-[protein] + alpha-D-glucose 6-phosphate. Its function is as follows. Catalyzes the reversible isomerization of alpha-D-glucose 1-phosphate to alpha-D-glucose 6-phosphate. The mechanism proceeds via the intermediate compound alpha-D-glucose 1,6-bisphosphate. This enzyme participates in both the breakdown and synthesis of glucose. This Bromus inermis (Smooth brome grass) protein is Phosphoglucomutase, cytoplasmic (PGM1).